We begin with the raw amino-acid sequence, 270 residues long: Phosphonoacetaldehyde hydrolase (270 aa).

The active-site Nucleophile is the aspartate 11. Mg(2+)-binding residues include aspartate 11 and alanine 13. Residue lysine 53 is the Schiff-base intermediate with substrate of the active site. Aspartate 187 lines the Mg(2+) pocket.

This sequence belongs to the HAD-like hydrolase superfamily. PhnX family. In terms of assembly, homodimer. The cofactor is Mg(2+).

The catalysed reaction is phosphonoacetaldehyde + H2O = acetaldehyde + phosphate + H(+). Functionally, involved in phosphonate degradation. The protein is Phosphonoacetaldehyde hydrolase of Salmonella paratyphi C (strain RKS4594).